Reading from the N-terminus, the 360-residue chain is Homoserine O-succinyltransferase (360 aa).

Cys-146 acts as the Acyl-thioester intermediate in catalysis. Positions 167 and 196 each coordinate substrate. The active-site Proton acceptor is His-239. The active site involves Glu-241. Residue Arg-253 coordinates substrate.

The protein belongs to the MetA family.

Its subcellular location is the cytoplasm. The enzyme catalyses L-homoserine + succinyl-CoA = O-succinyl-L-homoserine + CoA. Its pathway is amino-acid biosynthesis; L-methionine biosynthesis via de novo pathway; O-succinyl-L-homoserine from L-homoserine: step 1/1. In terms of biological role, transfers a succinyl group from succinyl-CoA to L-homoserine, forming succinyl-L-homoserine. In vitro, can also use glutaryl-CoA as acyl donor. This Thiothrix nivea (strain ATCC 35100 / DSM 5205 / JP2) protein is Homoserine O-succinyltransferase.